Consider the following 379-residue polypeptide: Cobalt-precorrin-5B C(1)-methyltransferase (379 aa).

It belongs to the CbiD family.

The catalysed reaction is Co-precorrin-5B + S-adenosyl-L-methionine = Co-precorrin-6A + S-adenosyl-L-homocysteine. It functions in the pathway cofactor biosynthesis; adenosylcobalamin biosynthesis; cob(II)yrinate a,c-diamide from sirohydrochlorin (anaerobic route): step 6/10. Catalyzes the methylation of C-1 in cobalt-precorrin-5B to form cobalt-precorrin-6A. This chain is Cobalt-precorrin-5B C(1)-methyltransferase, found in Edwardsiella ictaluri (strain 93-146).